We begin with the raw amino-acid sequence, 202 residues long: Protein-methionine-sulfoxide reductase heme-binding subunit MsrQ (202 aa).

6 helical membrane passes run 8-28 (LAVF…AWIF), 42-62 (LGLG…LQKL), 75-95 (LGLW…VFIL), 110-130 (PYII…ITSN), 147-167 (LVYL…RADL), and 169-189 (EWTL…PSIA).

Belongs to the MsrQ family. Heterodimer of a catalytic subunit (MsrP) and a heme-binding subunit (MsrQ). Requires FMN as cofactor. It depends on heme b as a cofactor.

Its subcellular location is the cell inner membrane. In terms of biological role, part of the MsrPQ system that repairs oxidized periplasmic proteins containing methionine sulfoxide residues (Met-O), using respiratory chain electrons. Thus protects these proteins from oxidative-stress damage caused by reactive species of oxygen and chlorine generated by the host defense mechanisms. MsrPQ is essential for the maintenance of envelope integrity under bleach stress, rescuing a wide series of structurally unrelated periplasmic proteins from methionine oxidation. MsrQ provides electrons for reduction to the reductase catalytic subunit MsrP, using the quinone pool of the respiratory chain. The sequence is that of Protein-methionine-sulfoxide reductase heme-binding subunit MsrQ from Pseudomonas aeruginosa (strain LESB58).